Consider the following 561-residue polypeptide: Phosphoinositide phospholipase C 1 (561 aa).

The 34-residue stretch at E21 to E54 folds into the EF-hand domain. The region spanning Q105–K249 is the PI-PLC X-box domain. Active-site residues include H120 and H166. Residues Q256–D266 are compositionally biased toward polar residues. The segment at Q256–D285 is disordered. Over residues E267 to D276 the composition is skewed to basic and acidic residues. Positions R294–L410 constitute a PI-PLC Y-box domain. Residues P414–D541 enclose the C2 domain. Ca(2+)-binding residues include D452, D458, D510, D512, and D518.

The cofactor is Ca(2+). As to expression, expressed in stems, leaves, roots, flowers and siliques. Predominant in the vascular tissues of roots and leaves.

The protein resides in the cell membrane. The enzyme catalyses a 1,2-diacyl-sn-glycero-3-phospho-(1D-myo-inositol-4,5-bisphosphate) + H2O = 1D-myo-inositol 1,4,5-trisphosphate + a 1,2-diacyl-sn-glycerol + H(+). Its function is as follows. The production of the second messenger molecules diacylglycerol (DAG) and inositol 1,4,5-trisphosphate (IP3) is mediated by activated phosphatidylinositol-specific phospholipase C enzymes. Required for secondary responses to abscisic acid signals. The protein is Phosphoinositide phospholipase C 1 (PLC1) of Arabidopsis thaliana (Mouse-ear cress).